The following is a 166-amino-acid chain: UPF0336 protein ML2425 (166 aa).

A MaoC-like domain is found at 10-131; it reads LIGKHYRQLD…VIAEVRSEVT (122 aa).

Belongs to the UPF0336 family.

In Mycobacterium leprae (strain TN), this protein is UPF0336 protein ML2425.